We begin with the raw amino-acid sequence, 532 residues long: CTP synthase (532 aa).

The interval 1-269 (MNQASTRFIF…DTQILNHFNI (269 aa)) is amidoligase domain. Ser-17 contacts CTP. Ser-17 lines the UTP pocket. ATP is bound by residues 18–23 (SLGKGL) and Asp-75. Asp-75 and Glu-143 together coordinate Mg(2+). Residues 150–152 (DIE), 190–195 (KTKPTQ), and Lys-226 contribute to the CTP site. Residues 190-195 (KTKPTQ) and Lys-226 each bind UTP. In terms of domain architecture, Glutamine amidotransferase type-1 spans 294-532 (NVAIIGKYIK…FISFIKASLD (239 aa)). Gly-355 serves as a coordination point for L-glutamine. Cys-382 serves as the catalytic Nucleophile; for glutamine hydrolysis. Residues 383–386 (MGMQ), Glu-406, and Arg-462 each bind L-glutamine. Catalysis depends on residues His-509 and Glu-511.

Belongs to the CTP synthase family. Homotetramer.

The enzyme catalyses UTP + L-glutamine + ATP + H2O = CTP + L-glutamate + ADP + phosphate + 2 H(+). It carries out the reaction L-glutamine + H2O = L-glutamate + NH4(+). It catalyses the reaction UTP + NH4(+) + ATP = CTP + ADP + phosphate + 2 H(+). It participates in pyrimidine metabolism; CTP biosynthesis via de novo pathway; CTP from UDP: step 2/2. Allosterically activated by GTP, when glutamine is the substrate; GTP has no effect on the reaction when ammonia is the substrate. The allosteric effector GTP functions by stabilizing the protein conformation that binds the tetrahedral intermediate(s) formed during glutamine hydrolysis. Inhibited by the product CTP, via allosteric rather than competitive inhibition. In terms of biological role, catalyzes the ATP-dependent amination of UTP to CTP with either L-glutamine or ammonia as the source of nitrogen. Regulates intracellular CTP levels through interactions with the four ribonucleotide triphosphates. The chain is CTP synthase from Ehrlichia chaffeensis (strain ATCC CRL-10679 / Arkansas).